Reading from the N-terminus, the 1082-residue chain is RE1-silencing transcription factor (1082 aa).

Positions 32 to 117 (DLHELSKAEL…SLELSAVEPQ (86 aa)) are interaction with SIN3A. An interaction with SIN3B region spans residues 43 to 57 (APQLIMLANVALTGE). An interaction with ZFP90 region spans residues 140-413 (PVAEDKCRSS…KSKHPTCPSK (274 aa)). Residues 154–176 (FRCKPCQYEAESEEQFVHHIRIH) form a C2H2-type 1 zinc finger. Residues 196-207 (SGSSPAEEGEFS) are required for binding to the neuron-restrictive silencer element. 7 C2H2-type zinc fingers span residues 211 to 235 (IRCD…HHLR), 243 to 265 (YKCI…LRNH), 271 to 293 (YTCS…VRTH), 299 to 321 (YKCE…MRTH), 327 to 350 (FKCD…RQVH), 356 to 378 (LNCP…VELH), and 384 to 407 (FNCP…KSKH). 2 disordered regions span residues 408 to 809 (PTCP…ELSL) and 831 to 1027 (SKLL…KAGL). Basic and acidic residues predominate over residues 440-475 (EKMENEQTKTKGDVSGKKNEKPVKAVGKDASKEKKP). Low complexity predominate over residues 477–497 (SSVSVVQVTTRTRKSAVAAET). Basic residues predominate over residues 581–597 (KGTKKTPPKTKTSKKGG). A compositionally biased stretch (polar residues) spans 630–640 (VTGSGSSQTEL). 2 stretches are compositionally biased toward pro residues: residues 684-713 (YPQP…PAPP) and 729-751 (KEPP…PPPM). Composition is skewed to basic and acidic residues over residues 798 to 807 (LRKDRAEKEL) and 854 to 864 (NSREETPKDQE). Over residues 900–909 (RVSSSEQNSA) the composition is skewed to polar residues. At S950 the chain carries Phosphoserine. Positions 985-1063 (EGIHSHDGSD…HLNRHLVNVY (79 aa)) are interaction with RCOR1. The segment at 1036–1058 (FVCIFCDRSFRKEKDYSKHLNRH) adopts a C2H2-type 9 zinc-finger fold.

In terms of assembly, isoform 1 and isoform 2 form heterodimers. Isoform 2: Forms homodimers and homooligomers; binds to the neuron-restrictive silencer element (NRSE) as monomer. Interacts with SIN3A, SIN3B and RCOR1. Interacts with CDYL. Interacts with EHMT1 and EHMT2 only in the presence of CDYL. Part of a complex containing at least CDYL, REST, WIZ, SETB1, EHMT1 and EHMT2. Interacts (via zinc-finger DNA-binding domain) with ZFP90 (via N- and C-termini); the interaction inhibits REST repressor activity. Interacts (via C2H2-type zinc finger 5) with PRICKLE1. Interacts with FBXW11 and BTRC. Interacts with USP7. In terms of processing, O-glycosylated. Phosphorylated; phosphorylation is required for ubiquitination. Post-translationally, ubiquitinated; ubiquitination is mediated by BTRC and leads to proteasomal degradation in G2 phase. Ubiquitination increases during neuronal differentiation. Deubiquitinated by USP7; leading to its stabilization and promoting the maintenance of neural progenitor cells. As to expression, expressed in the hippocampus, including quiescent neuronal progenitor (QNP) cells, transient-amplifying progenitor (TAP) cells, neuroblasts and mature neurons (at protein level). Expressed in embryonic stem cells (at protein level). Expressed in many non-neuronal tissues including the heart and liver. Abundantly expressed in osteoblastic lineage cells. Expressed in the spleen, kidney, blood cells, cortex, neocortex and in the utricle, saccule and organ of Corti of the inner ear. Isoform 2: Expressed in the cortex, neocortex and in the utricle, saccule and organ of Corti of the inner ear.

Its subcellular location is the nucleus. The protein localises to the cytoplasm. Transcriptional repressor which binds neuron-restrictive silencer element (NRSE) and represses neuronal gene transcription in non-neuronal cells. Restricts the expression of neuronal genes by associating with two distinct corepressors, SIN3A and RCOR1, which in turn recruit histone deacetylase to the promoters of REST-regulated genes. Mediates repression by recruiting the BHC complex at RE1/NRSE sites which acts by deacetylating and demethylating specific sites on histones, thereby acting as a chromatin modifier. Transcriptional repression by REST-CDYL via the recruitment of histone methyltransferase EHMT2 may be important in transformation suppression. Represses the expression of SRRM4 in non-neural cells to prevent the activation of neural-specific splicing events and to prevent production of REST isoform 2. Repressor activity may be inhibited by forming heterodimers with isoform 2, thereby preventing binding to NRSE or binding to corepressors and leading to derepression of target genes. Also maintains repression of neuronal genes in neural stem cells, and allows transcription and differentiation into neurons by dissociation from RE1/NRSE sites of target genes. Thereby is involved in maintaining the quiescent state of adult neural stem cells and preventing premature differentiation into mature neurons. Plays a role in the developmental switch in synaptic NMDA receptor composition during postnatal development, by repressing GRIN2B expression and thereby altering NMDA receptor properties from containing primarily GRIN2B to primarily GRIN2A subunits. Acts as a regulator of osteoblast differentiation. Key repressor of gene expression in hypoxia; represses genes in hypoxia by direct binding to an RE1/NRSE site on their promoter regions. May also function in stress resistance in the brain during aging; possibly by regulating expression of genes involved in cell death and in the stress response. Repressor of gene expression in the hippocampus after ischemia by directly binding to RE1/NRSE sites and recruiting SIN3A and RCOR1 to promoters of target genes, thereby promoting changes in chromatin modifications and ischemia-induced cell death. After ischemia, might play a role in repression of miR-132 expression in hippocampal neurons, thereby leading to neuronal cell death. Functionally, binds to the 3' region of the neuron-restrictive silencer element (NRSE), with lower affinity than isoform 1. Exhibits weaker repressor activity compared to isoform 1. May negatively regulate the repressor activity of isoform 1 by binding to isoform 1, thereby preventing its binding to NRSE and leading to derepression of target genes. However, in another study, does not appear to be implicated in repressor activity of a NRSE motif-containing reporter construct nor in inhibitory activity on the isoform 1 transcriptional repressor activity. Post-transcriptional inactivation of REST by SRRM4-dependent alternative splicing into isoform 2 is required in mechanosensory hair cells in the inner ear for derepression of neuronal genes, maintenance of hair cells and hearing. The chain is RE1-silencing transcription factor (Rest) from Mus musculus (Mouse).